We begin with the raw amino-acid sequence, 80 residues long: Putative membrane protein insertion efficiency factor (80 aa).

The protein belongs to the UPF0161 family.

The protein localises to the cell membrane. Could be involved in insertion of integral membrane proteins into the membrane. This Limosilactobacillus fermentum (strain NBRC 3956 / LMG 18251) (Lactobacillus fermentum) protein is Putative membrane protein insertion efficiency factor.